Reading from the N-terminus, the 247-residue chain is Cell division protein ZapD (247 aa).

It belongs to the ZapD family. Interacts with FtsZ.

It localises to the cytoplasm. Cell division factor that enhances FtsZ-ring assembly. Directly interacts with FtsZ and promotes bundling of FtsZ protofilaments, with a reduction in FtsZ GTPase activity. The chain is Cell division protein ZapD from Shigella boydii serotype 18 (strain CDC 3083-94 / BS512).